Here is a 101-residue protein sequence, read N- to C-terminus: Urease subunit beta (101 aa).

This sequence belongs to the urease beta subunit family. As to quaternary structure, heterotrimer of UreA (gamma), UreB (beta) and UreC (alpha) subunits. Three heterotrimers associate to form the active enzyme.

Its subcellular location is the cytoplasm. It catalyses the reaction urea + 2 H2O + H(+) = hydrogencarbonate + 2 NH4(+). The protein operates within nitrogen metabolism; urea degradation; CO(2) and NH(3) from urea (urease route): step 1/1. The chain is Urease subunit beta from Sinorhizobium fredii (strain NBRC 101917 / NGR234).